Reading from the N-terminus, the 190-residue chain is MAKLRDYYKSHVVYDLMREFKYKSVMQVPKINKITISMGVGKSIINKKFLERAIEDLEMISGQKPVITKARKSIASFKIRQGQEIGCKVTLRRKRMWEFFERLISIAIPRIRDFRGLSIKSFDGYGNYTMGIREQIIFPEINYDTIDGIRGMNITITTNAVSDKEAYVLLRAFRFPLKNNDSIYTSTEEH.

This sequence belongs to the universal ribosomal protein uL5 family. Part of the 50S ribosomal subunit; part of the 5S rRNA/L5/L18/L25 subcomplex. Contacts the 5S rRNA and the P site tRNA. Forms a bridge to the 30S subunit in the 70S ribosome.

In terms of biological role, this is one of the proteins that bind and probably mediate the attachment of the 5S RNA into the large ribosomal subunit, where it forms part of the central protuberance. In the 70S ribosome it contacts protein S13 of the 30S subunit (bridge B1b), connecting the 2 subunits; this bridge is implicated in subunit movement. Contacts the P site tRNA; the 5S rRNA and some of its associated proteins might help stabilize positioning of ribosome-bound tRNAs. This chain is Large ribosomal subunit protein uL5, found in Blochmanniella floridana.